The primary structure comprises 81 residues: Defensin-like protein 45 (81 aa).

The first 27 residues, 1 to 27 (MAITKTSATFVLLIILAASLSNFNVLA), serve as a signal peptide directing secretion. Disulfide bonds link cysteine 40–cysteine 79, cysteine 44–cysteine 67, cysteine 53–cysteine 77, and cysteine 57–cysteine 78.

This sequence belongs to the DEFL family.

It is found in the secreted. This is Defensin-like protein 45 from Arabidopsis thaliana (Mouse-ear cress).